The following is a 510-amino-acid chain: Probable cytosol aminopeptidase (510 aa).

Residues Lys-254 and Asp-259 each contribute to the Mn(2+) site. Residue Lys-266 is part of the active site. Mn(2+)-binding residues include Asp-277, Asp-336, and Glu-338. The active site involves Arg-340. The interval 487-510 (AQPVKASPKTRPARKSTPAAKTRA) is disordered.

This sequence belongs to the peptidase M17 family. Requires Mn(2+) as cofactor.

The protein resides in the cytoplasm. It carries out the reaction Release of an N-terminal amino acid, Xaa-|-Yaa-, in which Xaa is preferably Leu, but may be other amino acids including Pro although not Arg or Lys, and Yaa may be Pro. Amino acid amides and methyl esters are also readily hydrolyzed, but rates on arylamides are exceedingly low.. The enzyme catalyses Release of an N-terminal amino acid, preferentially leucine, but not glutamic or aspartic acids.. Functionally, presumably involved in the processing and regular turnover of intracellular proteins. Catalyzes the removal of unsubstituted N-terminal amino acids from various peptides. This chain is Probable cytosol aminopeptidase, found in Polaromonas naphthalenivorans (strain CJ2).